A 55-amino-acid chain; its full sequence is Lantibiotic nisin-U (55 aa).

Positions 1-24 are excised as a propeptide; the sequence is MNNEDFNLDLIKISKENNSGASPR. 2,3-didehydrobutyrine is present on threonine 26. Residues 27 to 31 constitute a cross-link (lanthionine (Ser-Cys)); it reads SKSLC. At serine 29 the chain carries 2,3-didehydroalanine (Ser). 4 cross-links (beta-methyllanthionine (Thr-Cys)) span residues 32–35, 37–43, 47–50, and 49–52; these read TPGC, TGILMTC, TATC, and TCGC. Threonine 42 is modified (2,3-didehydrobutyrine).

Post-translationally, maturation of lantibiotics involves the enzymatic conversion of Thr, and Ser into dehydrated AA and the formation of thioether bonds with cysteine. This is followed by membrane translocation and cleavage of the modified precursor.

It is found in the secreted. Lanthionine-containing peptide antibiotic (lantibiotic) active on Gram-positive bacteria. The bactericidal activity of lantibiotics is based on depolarization of energized bacterial cytoplasmic membranes, initiated by the formation of aqueous transmembrane pores. The protein is Lantibiotic nisin-U (nsuA) of Streptococcus uberis.